A 377-amino-acid polypeptide reads, in one-letter code: Hydrogenase maturation factor HypD (377 aa).

Fe cation is bound by residues C41, C69, and C72.

It belongs to the HypD family. Requires [4Fe-4S] cluster as cofactor.

The protein operates within protein modification; [NiFe] hydrogenase maturation. Involved in the maturation of [NiFe] hydrogenases. Involved in the biosynthesis of the Fe(CN)(2)CO cofactor. This is Hydrogenase maturation factor HypD from Rhodobacter capsulatus (Rhodopseudomonas capsulata).